Consider the following 573-residue polypeptide: Protein translocase subunit SecD (573 aa).

A helical membrane pass occupies residues 13–33 (YLSVFLVMLIGIYLLVFFTGD). The disordered stretch occupies residues 127–200 (AQPAAEEPQP…PPAEAPATDP (74 aa)). 2 stretches are compositionally biased toward pro residues: residues 135–154 (QPAP…PPPA) and 161–194 (SPQP…PPAE). The next 5 membrane-spanning stretches (helical) occupy residues 385-405 (AGMI…LLYY), 410-430 (LLTA…LVLL), 441-461 (AGIA…VVFF), 489-509 (IVSG…LAIG), and 514-534 (FAFT…LVTW).

Belongs to the SecD/SecF family. SecD subfamily. Forms a complex with SecF. Part of the essential Sec protein translocation apparatus which comprises SecA, SecYEG and auxiliary proteins SecDF. Other proteins may also be involved.

The protein localises to the cell membrane. Its function is as follows. Part of the Sec protein translocase complex. Interacts with the SecYEG preprotein conducting channel. SecDF uses the proton motive force (PMF) to complete protein translocation after the ATP-dependent function of SecA. The sequence is that of Protein translocase subunit SecD from Mycobacterium tuberculosis (strain CDC 1551 / Oshkosh).